The sequence spans 297 residues: Ribosomal RNA small subunit methyltransferase H (297 aa).

Residues 36–38 (GGH), aspartate 56, leucine 90, aspartate 104, and histidine 111 contribute to the S-adenosyl-L-methionine site.

The protein belongs to the methyltransferase superfamily. RsmH family.

It is found in the cytoplasm. It catalyses the reaction cytidine(1402) in 16S rRNA + S-adenosyl-L-methionine = N(4)-methylcytidine(1402) in 16S rRNA + S-adenosyl-L-homocysteine + H(+). Specifically methylates the N4 position of cytidine in position 1402 (C1402) of 16S rRNA. The sequence is that of Ribosomal RNA small subunit methyltransferase H from Dictyoglomus thermophilum (strain ATCC 35947 / DSM 3960 / H-6-12).